Reading from the N-terminus, the 187-residue chain is uncharacterized protein (187 aa).

This is an uncharacterized protein from Saccharomyces cerevisiae (strain ATCC 204508 / S288c) (Baker's yeast).